The sequence spans 125 residues: DCPWDWSSHEGHCYKVFKLRKTWEDAEKFCTEQARGGHLISLKSTEEVDFMIKLAYPILKANLVWIGLRDFWRDCHMGWRDHANLLYKAWSDEPNCSVAKTTDNQWFRRKCNISQYFVCQSRVPR.

Intrachain disulfides connect cysteine 2-cysteine 13, cysteine 30-cysteine 119, and cysteine 96-cysteine 111. Residues 9-120 (HEGHCYKVFK…CNISQYFVCQ (112 aa)) form the C-type lectin domain. The N-linked (GlcNAc...) asparagine glycan is linked to asparagine 95. Asparagine 112 carries N-linked (GlcNAc...) asparagine glycosylation.

The protein belongs to the snaclec family. In terms of assembly, heterodimer; disulfide-linked. In terms of tissue distribution, expressed by the venom gland.

It is found in the secreted. Functionally, interferes with one step of hemostasis (modulation of platelet aggregation, or coagulation cascade, for example). The polypeptide is Snaclec B6 (Macrovipera lebetinus (Levantine viper)).